The sequence spans 365 residues: 2-aminoethylphosphonate--pyruvate transaminase (365 aa).

An N6-(pyridoxal phosphate)lysine modification is found at K194.

The protein belongs to the class-V pyridoxal-phosphate-dependent aminotransferase family. PhnW subfamily. Homodimer. The cofactor is pyridoxal 5'-phosphate.

The catalysed reaction is (2-aminoethyl)phosphonate + pyruvate = phosphonoacetaldehyde + L-alanine. Its function is as follows. Involved in phosphonate degradation. The sequence is that of 2-aminoethylphosphonate--pyruvate transaminase from Bacillus cereus (strain ATCC 14579 / DSM 31 / CCUG 7414 / JCM 2152 / NBRC 15305 / NCIMB 9373 / NCTC 2599 / NRRL B-3711).